A 226-amino-acid polypeptide reads, in one-letter code: Enolase-phosphatase E1 (226 aa).

This sequence belongs to the HAD-like hydrolase superfamily. MasA/MtnC family. Monomer. Requires Mg(2+) as cofactor.

The catalysed reaction is 5-methylsulfanyl-2,3-dioxopentyl phosphate + H2O = 1,2-dihydroxy-5-(methylsulfanyl)pent-1-en-3-one + phosphate. It functions in the pathway amino-acid biosynthesis; L-methionine biosynthesis via salvage pathway; L-methionine from S-methyl-5-thio-alpha-D-ribose 1-phosphate: step 3/6. Its pathway is amino-acid biosynthesis; L-methionine biosynthesis via salvage pathway; L-methionine from S-methyl-5-thio-alpha-D-ribose 1-phosphate: step 4/6. Bifunctional enzyme that catalyzes the enolization of 2,3-diketo-5-methylthiopentyl-1-phosphate (DK-MTP-1-P) into the intermediate 2-hydroxy-3-keto-5-methylthiopentenyl-1-phosphate (HK-MTPenyl-1-P), which is then dephosphorylated to form the acireductone 1,2-dihydroxy-3-keto-5-methylthiopentene (DHK-MTPene). This Shewanella sp. (strain ANA-3) protein is Enolase-phosphatase E1.